The following is a 160-amino-acid chain: MAVDSREKGKRGEYQVRDILRERTGLEWERVPGSGAFGQSHGLKGDIYLPPQSGHISKYCFEVKWYKDDNISSNLFNVGESTLEKWWQQCSREGEQMNSKPALIFKKDRGQWLIALDSSDPMVDNLMSRTHMVLNKKDMEIVIGLFEPWLHHASVEDLIK.

The protein is Protein D14 (D14) of Escherichia phage T5 (Enterobacteria phage T5).